The chain runs to 647 residues: Exoribonuclease 2 (647 aa).

In terms of domain architecture, RNB spans 192–520 (REDLTALSFV…NHRLLKAIIS (329 aa)). The 83-residue stretch at 565 to 647 (ESTFNAEIID…ETRNIVARPI (83 aa)) folds into the S1 motif domain.

The protein belongs to the RNR ribonuclease family. RNase II subfamily.

The protein resides in the cytoplasm. It carries out the reaction Exonucleolytic cleavage in the 3'- to 5'-direction to yield nucleoside 5'-phosphates.. Its function is as follows. Involved in mRNA degradation. Hydrolyzes single-stranded polyribonucleotides processively in the 3' to 5' direction. The protein is Exoribonuclease 2 of Proteus mirabilis (strain HI4320).